The primary structure comprises 290 residues: Xyloglucan endotransglucosylase/hydrolase protein 9 (290 aa).

The first 26 residues, 1–26, serve as a signal peptide directing secretion; that stretch reads MVGMDLFKCVMMIMVLVVSCGEAVSG. A GH16 domain is found at 27-215; the sequence is AKFDELYRSS…WSHAPFVASY (189 aa). An N-linked (GlcNAc...) asparagine glycan is attached at N55. E101 acts as the Nucleophile in catalysis. Residue E105 is the Proton donor of the active site. Xyloglucan is bound at residue E105. Residue N109 is glycosylated (N-linked (GlcNAc...) asparagine). Residues 118 to 120, 128 to 130, 194 to 195, and G199 contribute to the xyloglucan site; these read QTN, NRE, and DW. 2 disulfide bridges follow: C223-C234 and C271-C284. Residue R276 participates in xyloglucan binding.

It belongs to the glycosyl hydrolase 16 family. XTH group 1 subfamily. In terms of processing, contains at least one intrachain disulfide bond essential for its enzymatic activity. As to expression, highly expressed in shoot apices. In the vegetative and reproductive phases, it accumulates in the shoot apex region, where cell division is most active. In the reproductive phase, it is also expressed in flower buds, flower stalks and internodes bearing flowers.

The protein localises to the secreted. The protein resides in the cell wall. It localises to the extracellular space. Its subcellular location is the apoplast. The catalysed reaction is breaks a beta-(1-&gt;4) bond in the backbone of a xyloglucan and transfers the xyloglucanyl segment on to O-4 of the non-reducing terminal glucose residue of an acceptor, which can be a xyloglucan or an oligosaccharide of xyloglucan.. Functionally, catalyzes xyloglucan endohydrolysis (XEH) and/or endotransglycosylation (XET). Cleaves and religates xyloglucan polymers, an essential constituent of the primary cell wall, and thereby participates in cell wall construction of growing tissues. Involved in internodal cell elongation. This Arabidopsis thaliana (Mouse-ear cress) protein is Xyloglucan endotransglucosylase/hydrolase protein 9 (XTH9).